We begin with the raw amino-acid sequence, 73 residues long: Aldehyde dehydrogenase (73 aa).

The protein belongs to the aldehyde dehydrogenase family.

It catalyses the reaction an aldehyde + NAD(+) + H2O = a carboxylate + NADH + 2 H(+). It participates in alcohol metabolism; ethanol degradation; acetate from ethanol: step 2/2. The chain is Aldehyde dehydrogenase from Geobacillus stearothermophilus (Bacillus stearothermophilus).